We begin with the raw amino-acid sequence, 208 residues long: uncharacterized protein (208 aa).

The region spanning 4-71 (DYYAILNITP…SRRAQYDRES (68 aa)) is the J domain. The segment at 67-100 (YDRESASSSAKPRQSFFSRTNPQPQSQSQQGGPS) is disordered. A compositionally biased stretch (polar residues) spans 72–87 (ASSSAKPRQSFFSRTN). The segment covering 88 to 100 (PQPQSQSQQGGPS) has biased composition (low complexity). Residues 127-147 (GIANAFWTIVGTLAGAALGFI) traverse the membrane as a helical segment.

This sequence belongs to the DnaJ family.

Its subcellular location is the endoplasmic reticulum membrane. This is an uncharacterized protein from Schizosaccharomyces pombe (strain 972 / ATCC 24843) (Fission yeast).